The sequence spans 209 residues: Interleukin-6 (209 aa).

The first 26 residues, 1–26 (RFTSAFSPVAFSLGLLLVMATAFPTP), serve as a signal peptide directing secretion. Residues 28-47 (PVGGESQADATSNRPPLTSP) are disordered. Residues cysteine 69 and cysteine 75 are joined by a disulfide bond. Serine 78 carries the post-translational modification Phosphoserine. Cysteine 98 and cysteine 108 form a disulfide bridge.

It belongs to the IL-6 superfamily. As to quaternary structure, component of a hexamer of two molecules each of IL6, IL6R and IL6ST; first binds to IL6R to associate with the signaling subunit IL6ST. Interacts with IL6R (via the N-terminal ectodomain); this interaction may be affected by IL6R-binding with SORL1, hence decreasing IL6 cis signaling. Interacts with SORL1 (via the N-terminal ectodomain); this interaction leads to IL6 internalization and lysosomal degradation. May form a trimeric complex with the soluble SORL1 ectodomain and soluble IL6R receptor; this interaction might stabilize circulating IL6, hence promoting IL6 trans signaling.

The protein localises to the secreted. Functionally, cytokine with a wide variety of biological functions in immunity, tissue regeneration, and metabolism. Binds to IL6R, then the complex associates to the signaling subunit IL6ST/gp130 to trigger the intracellular IL6-signaling pathway. The interaction with the membrane-bound IL6R and IL6ST stimulates 'classic signaling', whereas the binding of IL6 and soluble IL6R to IL6ST stimulates 'trans-signaling'. Alternatively, 'cluster signaling' occurs when membrane-bound IL6:IL6R complexes on transmitter cells activate IL6ST receptors on neighboring receiver cells. IL6 is a potent inducer of the acute phase response. Rapid production of IL6 contributes to host defense during infection and tissue injury, but excessive IL6 synthesis is involved in disease pathology. In the innate immune response, is synthesized by myeloid cells, such as macrophages and dendritic cells, upon recognition of pathogens through toll-like receptors (TLRs) at the site of infection or tissue injury. In the adaptive immune response, is required for the differentiation of B cells into immunoglobulin-secreting cells. Plays a major role in the differentiation of CD4(+) T cell subsets. Essential factor for the development of T follicular helper (Tfh) cells that are required for the induction of germinal-center formation. Required to drive naive CD4(+) T cells to the Th17 lineage. Also required for proliferation of myeloma cells and the survival of plasmablast cells. Its function is as follows. Acts as an essential factor in bone homeostasis and on vessels directly or indirectly by induction of VEGF, resulting in increased angiogenesis activity and vascular permeability. Induces, through 'trans-signaling' and synergistically with IL1B and TNF, the production of VEGF. Involved in metabolic controls, is discharged into the bloodstream after muscle contraction increasing lipolysis and improving insulin resistance. 'Trans-signaling' in central nervous system also regulates energy and glucose homeostasis. Mediates, through GLP-1, crosstalk between insulin-sensitive tissues, intestinal L cells and pancreatic islets to adapt to changes in insulin demand. Also acts as a myokine. Plays a protective role during liver injury, being required for maintenance of tissue regeneration. Also has a pivotal role in iron metabolism by regulating HAMP/hepcidin expression upon inflammation or bacterial infection. Through activation of IL6ST-YAP-NOTCH pathway, induces inflammation-induced epithelial regeneration. This is Interleukin-6 (IL6) from Phoca vitulina (Harbor seal).